The following is a 164-amino-acid chain: Putative 4-hydroxy-4-methyl-2-oxoglutarate aldolase (164 aa).

Substrate contacts are provided by residues Gly-80 to Leu-83 and Arg-102. Position 103 (Asp-103) interacts with a divalent metal cation.

The protein belongs to the class II aldolase/RraA-like family. Homotrimer. A divalent metal cation is required as a cofactor.

It carries out the reaction 4-hydroxy-4-methyl-2-oxoglutarate = 2 pyruvate. The enzyme catalyses oxaloacetate + H(+) = pyruvate + CO2. Its function is as follows. Catalyzes the aldol cleavage of 4-hydroxy-4-methyl-2-oxoglutarate (HMG) into 2 molecules of pyruvate. Also contains a secondary oxaloacetate (OAA) decarboxylase activity due to the common pyruvate enolate transition state formed following C-C bond cleavage in the retro-aldol and decarboxylation reactions. The protein is Putative 4-hydroxy-4-methyl-2-oxoglutarate aldolase of Paraburkholderia phytofirmans (strain DSM 17436 / LMG 22146 / PsJN) (Burkholderia phytofirmans).